Consider the following 263-residue polypeptide: UPF0739 protein C1orf74 homolog (263 aa).

The protein belongs to the UPF0739 family.

This is UPF0739 protein C1orf74 homolog from Rattus norvegicus (Rat).